A 265-amino-acid polypeptide reads, in one-letter code: Gap junction beta-4 protein (265 aa).

The stretch at 2 to 13 is an intramembrane region; the sequence is NWGFLQGILSGV. Residues 14–20 lie on the Cytoplasmic side of the membrane; sequence NKYSTAL. The helical transmembrane segment at 21–40 threads the bilayer; the sequence is GRIWLSVVFIFRVLVYVVAA. Topologically, residues 41–73 are extracellular; that stretch reads EEVWDDEQKDFICNTKQPGCPNVCYDEFFPVSH. Disulfide bonds link Cys-53/Cys-175, Cys-60/Cys-169, and Cys-64/Cys-164. A helical transmembrane segment spans residues 74 to 94; the sequence is VRLWALQLILVTCPSLLVVMH. The Cytoplasmic portion of the chain corresponds to 95–130; the sequence is VAYREERERKHRLKHGPDAPALYSNLSKKRGGLWWT. A helical membrane pass occupies residues 131–151; sequence YLLSLIFKAAVDSGFLYIFHC. Topologically, residues 152 to 184 are extracellular; sequence IYKDYDMPRVVACSVQPCPHTVDCYISRPTEKK. Residues 185–205 traverse the membrane as a helical segment; sequence VFTYFMVVTAAICILLNLSEV. Residues 206–265 are Cytoplasmic-facing; it reads AYLVGKRCMEVFRPRRQKTSRRHQLPDTCPPYVISKGHPQDESTVLTKAGMATVDAGVYP.

Belongs to the connexin family. Beta-type (group I) subfamily. In terms of assembly, a hemichannel or connexon is composed of a hexamer of connexins. A functional gap junction is formed by the apposition of two hemichannels. Forms heteromeric channels with GJB2. In terms of tissue distribution, detected in adult heart, kidney, skin and cochlea, where it is detected in spiral ganglion, stria vascularis, spiral limbus and spiral ligament (at protein level).

Its subcellular location is the cell membrane. It localises to the cell junction. The protein localises to the gap junction. Structural component of gap junctions. Gap junctions are dodecameric channels that connect the cytoplasm of adjoining cells. They are formed by the docking of two hexameric hemichannels, one from each cell membrane. Small molecules and ions diffuse from one cell to a neighboring cell via the central pore. This Rattus norvegicus (Rat) protein is Gap junction beta-4 protein (Gjb4).